The sequence spans 213 residues: Octanoyltransferase (213 aa).

Positions 32–207 (ENSHDEIWLV…NILALLNNPP (176 aa)) constitute a BPL/LPL catalytic domain. Substrate-binding positions include 71-78 (RGGQVTYH), 138-140 (SLG), and 151-153 (GLA). Cys-169 (acyl-thioester intermediate) is an active-site residue.

The protein belongs to the LipB family.

It localises to the cytoplasm. The catalysed reaction is octanoyl-[ACP] + L-lysyl-[protein] = N(6)-octanoyl-L-lysyl-[protein] + holo-[ACP] + H(+). It participates in protein modification; protein lipoylation via endogenous pathway; protein N(6)-(lipoyl)lysine from octanoyl-[acyl-carrier-protein]: step 1/2. In terms of biological role, catalyzes the transfer of endogenously produced octanoic acid from octanoyl-acyl-carrier-protein onto the lipoyl domains of lipoate-dependent enzymes. Lipoyl-ACP can also act as a substrate although octanoyl-ACP is likely to be the physiological substrate. The chain is Octanoyltransferase from Salmonella typhi.